Reading from the N-terminus, the 721-residue chain is Catalase-peroxidase 1 (721 aa).

The segment at residues 98-226 (WHAAGTYRIA…LAAVMMGLIY (129 aa)) is a cross-link (tryptophyl-tyrosyl-methioninium (Trp-Tyr) (with M-252)). His99 serves as the catalytic Proton acceptor. The segment at residues 226–252 (YVNPEGVDGQPDPLKTAHDVRVTFARM) is a cross-link (tryptophyl-tyrosyl-methioninium (Tyr-Met) (with W-98)). His267 contacts heme b.

It belongs to the peroxidase family. Peroxidase/catalase subfamily. As to quaternary structure, homodimer or homotetramer. Heme b serves as cofactor. Post-translationally, formation of the three residue Trp-Tyr-Met cross-link is important for the catalase, but not the peroxidase activity of the enzyme.

It catalyses the reaction H2O2 + AH2 = A + 2 H2O. The enzyme catalyses 2 H2O2 = O2 + 2 H2O. Its function is as follows. Bifunctional enzyme with both catalase and broad-spectrum peroxidase activity. In Vibrio parahaemolyticus serotype O3:K6 (strain RIMD 2210633), this protein is Catalase-peroxidase 1.